Reading from the N-terminus, the 834-residue chain is DNA polymerase I, thermostable (834 aa).

The 5'-3' exonuclease domain maps to 176–262 (RPEQWVDFRA…DLPLEVDLAQ (87 aa)). Positions 412 to 834 (ERLHRNLLKR…MGEDWLSAKG (423 aa)) are polymerase.

Belongs to the DNA polymerase type-A family.

It catalyses the reaction DNA(n) + a 2'-deoxyribonucleoside 5'-triphosphate = DNA(n+1) + diphosphate. Functionally, in addition to polymerase activity, this DNA polymerase exhibits 5'-3' exonuclease activity. The protein is DNA polymerase I, thermostable (polA) of Thermus thermophilus (strain ATCC 27634 / DSM 579 / HB8).